Here is a 301-residue protein sequence, read N- to C-terminus: Hydroxymycolate synthase MmaA4 (301 aa).

S-adenosyl-L-methionine is bound by residues 42-43 (YS), 81-83 (GCG), 103-108 (TLSKNQ), 132-133 (WE), and I145. The active site involves C278.

Belongs to the CFA/CMAS family. Monomer.

It functions in the pathway lipid metabolism; mycolic acid biosynthesis. Inhibited by S-adenosyl-N-decyl-aminoethyl (SADAE). Its function is as follows. Involved in the biosynthesis of hydroxymycolate, a common precursor of oxygenated mycolic acids (methoxy-mycolate and keto-mycolate). Probably transfers a methyl group from the S-adenosylmethionine (SAM) cofactor and, subsequently or simultaneously, a water molecule onto the double bound of ethylene substrates, leading to the formation of the hydroxylated product at the distal position. Involved in the activation of the antitubercular drug thiacetazone (TAC). This Mycobacterium tuberculosis (strain ATCC 25618 / H37Rv) protein is Hydroxymycolate synthase MmaA4 (mmaA4).